Reading from the N-terminus, the 260-residue chain is Putative enoyl-CoA hydratase/isomerase YngF (260 aa).

It belongs to the enoyl-CoA hydratase/isomerase family.

This chain is Putative enoyl-CoA hydratase/isomerase YngF (yngF), found in Bacillus subtilis (strain 168).